We begin with the raw amino-acid sequence, 448 residues long: MEKEKKVKYFLRKSAFGLASVSAAFLVGSTVFAVDSPIEDTPIIRNGGELTNLLGNSETTLALRNEESATADLTAAAVADTVAAAAAENAGAAAWEAAAAADALAKAKADALKEFNKYGVSDYYKNLINNAKTVEGIKDLQAQVVESAKKARISEATDGLSDFLKSQTPAEDTVKSIELAEAKVLANRELDKYGVSDYHKNLINNAKTVEGVKELIDEILAALPKTDTYKLILNGKTLKGETTTEAVDAATAEKVFKQYANDNGVDGEWTYDDATKTFTVTEKPEVIDASELTPAVTTYKLVINGKTLKGETTTKAVDAETAEKAFKQYANDNGVDGVWTYDDATKTFTVTEMVTEVPGDAPTEPEKPEASIPLVPLTPATPIAKDDAKKDDTKKEDAKKPEAKKDDAKKAETLPTTGEGSNPFFTAAALAVMAGAGALAVASKRKED.

An N-terminal signal peptide occupies residues 1 to 33 (MEKEKKVKYFLRKSAFGLASVSAAFLVGSTVFA). 4 repeat units span residues 104-140 (LAKA…IKDL), 179-215 (LAEA…VKEL), 228-282 (TYKL…TVTE), and 298-352 (TYKL…TVTE). Residues 104–215 (LAKAKADALK…AKTVEGVKEL (112 aa)) are 2 X 37 AA repeats. The 2 X 55 AA repeats stretch occupies residues 228–352 (TYKLILNGKT…DATKTFTVTE (125 aa)). A disordered region spans residues 358-422 (PGDAPTEPEK…TLPTTGEGSN (65 aa)). Residues 384-412 (AKDDAKKDDTKKEDAKKPEAKKDDAKKAE) are compositionally biased toward basic and acidic residues. Residues 386-410 (DDAKKDDTKKEDAKKPEAKKDDAKK) form a 5 X 5 AA repeats of [DE]-D-A-K-K region. The LPXTG sorting signal motif lies at 414–418 (LPTTG). The residue at position 417 (threonine 417) is a Pentaglycyl murein peptidoglycan amidated threonine. A propeptide spans 418 to 448 (GEGSNPFFTAAALAVMAGAGALAVASKRKED) (removed by sortase).

The protein resides in the secreted. It is found in the cell wall. In terms of biological role, binds to the constant Fc region of IgG with high affinity. In Streptococcus sp. group G, this protein is Immunoglobulin G-binding protein G (spg).